The chain runs to 136 residues: Large ribosomal subunit protein uL16 (136 aa).

The protein belongs to the universal ribosomal protein uL16 family. Part of the 50S ribosomal subunit.

Its function is as follows. Binds 23S rRNA and is also seen to make contacts with the A and possibly P site tRNAs. The sequence is that of Large ribosomal subunit protein uL16 from Karelsulcia muelleri (strain GWSS) (Sulcia muelleri).